Consider the following 128-residue polypeptide: Modulator protein MzrA (128 aa).

The Cytoplasmic segment spans residues 1–11; that stretch reads MMVMKRPSLRQ. A helical transmembrane segment spans residues 12–32; that stretch reads FSWLLGGSLLLGALFWLWLAV. Residues 33-128 lie on the Periplasmic side of the membrane; the sequence is QQQEATLAIR…RLRDAPHRLG (96 aa).

Belongs to the MzrA family. In terms of assembly, interacts with EnvZ.

Its subcellular location is the cell inner membrane. Functionally, modulates the activity of the EnvZ/OmpR two-component regulatory system, probably by directly modulating EnvZ enzymatic activity and increasing stability of phosphorylated OmpR. In Klebsiella pneumoniae subsp. pneumoniae (strain ATCC 700721 / MGH 78578), this protein is Modulator protein MzrA.